The following is a 598-amino-acid chain: Elongation factor 4 (598 aa).

In terms of domain architecture, tr-type G spans 2–184 (DNVRNFAIIA…AIITKLPAPQ (183 aa)). Residues 14-19 (DHGKST) and 131-134 (NKVD) contribute to the GTP site.

This sequence belongs to the TRAFAC class translation factor GTPase superfamily. Classic translation factor GTPase family. LepA subfamily.

It is found in the cell membrane. It carries out the reaction GTP + H2O = GDP + phosphate + H(+). In terms of biological role, required for accurate and efficient protein synthesis under certain stress conditions. May act as a fidelity factor of the translation reaction, by catalyzing a one-codon backward translocation of tRNAs on improperly translocated ribosomes. Back-translocation proceeds from a post-translocation (POST) complex to a pre-translocation (PRE) complex, thus giving elongation factor G a second chance to translocate the tRNAs correctly. Binds to ribosomes in a GTP-dependent manner. This chain is Elongation factor 4, found in Wolbachia sp. subsp. Brugia malayi (strain TRS).